The following is a 484-amino-acid chain: Sialidase-4 (484 aa).

The FRIP motif signature appears at 22–25 (YRVP). Substrate is bound by residues Arg23 and Arg43. Active-site proton acceptor residues include Asp47 and Asp48. Residues 127 to 138 (VASRDAGLSWGS) form a BNR 1 repeat. 2 residues coordinate substrate: Tyr177 and Tyr179. One copy of the BNR 2 repeat lies at 200–211 (FYSDDHGRTWRC). Substrate-binding residues include Glu222 and Arg242. The stretch at 251-262 (ALSTDEGTSFLP) is one BNR 3 repeat. Residues 284 to 357 (PAPAPNRPRD…GPRPGVSGDV (74 aa)) are disordered. Over residues 336 to 345 (RLQPRGDGPR) the composition is skewed to low complexity. Arg389 contributes to the substrate binding site. Residue Tyr419 is the Nucleophile of the active site. Glu440 is an active-site residue.

This sequence belongs to the glycosyl hydrolase 33 family. Post-translationally, N-glycosylated. In terms of tissue distribution, predominant form in liver. Also expressed in brain, kidney and colon. As to expression, highly expressed in brain and at lower levels in kidney and liver.

Its subcellular location is the cell membrane. The protein localises to the endoplasmic reticulum membrane. It localises to the microsome membrane. It is found in the mitochondrion membrane. The protein resides in the cell projection. Its subcellular location is the neuron projection. The protein localises to the mitochondrion inner membrane. It localises to the mitochondrion outer membrane. It is found in the lysosome lumen. The enzyme catalyses Hydrolysis of alpha-(2-&gt;3)-, alpha-(2-&gt;6)-, alpha-(2-&gt;8)- glycosidic linkages of terminal sialic acid residues in oligosaccharides, glycoproteins, glycolipids, colominic acid and synthetic substrates.. The catalysed reaction is a ganglioside GM3 + H2O = a beta-D-galactosyl-(1-&gt;4)-beta-D-glucosyl-(1&lt;-&gt;1)-ceramide + N-acetylneuraminate. It carries out the reaction a ganglioside GM3 (d18:1(4E)) + H2O = a beta-D-Gal-(1-&gt;4)-beta-D-Glc-(1&lt;-&gt;1)-Cer(d18:1(4E)) + N-acetylneuraminate. It catalyses the reaction a ganglioside GM2 + H2O = a ganglioside GA2 + N-acetylneuraminate. The enzyme catalyses a ganglioside GM2 (d18:1(4E)) + H2O = a ganglioside GA2 (d18:1(4E)) + N-acetylneuraminate. The catalysed reaction is a ganglioside GD1a + H2O = a ganglioside GM1 + N-acetylneuraminate. It carries out the reaction a ganglioside GD1a (d18:1(4E)) + H2O = a ganglioside GM1 (d18:1(4E)) + N-acetylneuraminate. It catalyses the reaction a ganglioside GD3 + H2O = a ganglioside GM3 + N-acetylneuraminate. The enzyme catalyses a ganglioside GD3 (d18:1(4E)) + H2O = a ganglioside GM3 (d18:1(4E)) + N-acetylneuraminate. Its function is as follows. Exo-alpha-sialidase that catalyzes the hydrolytic cleavage of the terminal sialic acid (N-acetylneuraminic acid, Neu5Ac) of a glycan moiety in the catabolism of glycolipids, glycoproteins and oligosacharides. Efficiently hydrolyzes gangliosides including alpha-(2-&gt;3)-sialylated GD1a and GM3 and alpha-(2-&gt;8)-sialylated GD3. Hydrolyzes poly-alpha-(2-&gt;8)-sialylated neural cell adhesion molecule NCAM1 likely at growth cones, suppressing neurite outgrowth in hippocampal neurons. May desialylate sialyl Lewis A and X antigens at the cell surface, down-regulating these glycan epitopes recognized by SELE/E selectin in the initiation of cell adhesion and extravasation. Has sialidase activity toward mucin, fetuin and sialyllactose. The protein is Sialidase-4 (NEU4) of Homo sapiens (Human).